The following is a 90-amino-acid chain: uncharacterized protein (90 aa).

The signal sequence occupies residues 1-20 (MEKLFVLVFALTLLAFSSEA). The interval 31–50 (QLLRSRRQDRPSKPGFPDEP) is disordered.

The protein resides in the secreted. This is an uncharacterized protein from Rattus norvegicus (Rat).